The following is a 629-amino-acid chain: TRAF3-interacting protein 1 (629 aa).

Positions Ala130 to Lys511 are disordered. The span at Ser145–Lys306 shows a compositional bias: basic and acidic residues. Residues Arg220–Arg282 are a coiled coil. The segment covering Glu352–Ala362 has biased composition (acidic residues). Residues Arg394–Pro403 are compositionally biased toward low complexity. Basic and acidic residues predominate over residues Gly471–Lys511. Residues Lys511–Ile602 are a coiled coil.

It belongs to the TRAF3IP1 family. In terms of assembly, component of the IFT complex B, at least composed of ift20, ift22, ift25, ift27, ift46, ift52, traf3ip1/ift54, ift57, ift74, ift80, ift81, and ift88. Interacts with ift88. Interacts with il13ra1. Binds to microtubules, traf3 and disc1. Interacts with map4.

It localises to the cytoplasm. Its subcellular location is the cytoskeleton. The protein resides in the cell projection. It is found in the cilium. The protein localises to the cilium axoneme. It localises to the cilium basal body. Its function is as follows. Plays an inhibitory role on IL13 signaling by binding to IL13RA1 and recruits TRAF3 and DISC1 to the microtubules. Involved in the regulation of microtubule cytoskeleton organization. Is a negative regulator of microtubule stability, acting through the control of MAP4 levels. Involved in ciliogenesis. The chain is TRAF3-interacting protein 1 (traf3ip1) from Danio rerio (Zebrafish).